The primary structure comprises 171 residues: 3-hydroxydecanoyl-[acyl-carrier-protein] dehydratase (171 aa).

His-70 is a catalytic residue.

This sequence belongs to the thioester dehydratase family. FabA subfamily. As to quaternary structure, homodimer.

The protein resides in the cytoplasm. It catalyses the reaction a (3R)-hydroxyacyl-[ACP] = a (2E)-enoyl-[ACP] + H2O. It carries out the reaction (3R)-hydroxydecanoyl-[ACP] = (2E)-decenoyl-[ACP] + H2O. The catalysed reaction is (2E)-decenoyl-[ACP] = (3Z)-decenoyl-[ACP]. Its pathway is lipid metabolism; fatty acid biosynthesis. Necessary for the introduction of cis unsaturation into fatty acids. Catalyzes the dehydration of (3R)-3-hydroxydecanoyl-ACP to E-(2)-decenoyl-ACP and then its isomerization to Z-(3)-decenoyl-ACP. Can catalyze the dehydratase reaction for beta-hydroxyacyl-ACPs with saturated chain lengths up to 16:0, being most active on intermediate chain length. This chain is 3-hydroxydecanoyl-[acyl-carrier-protein] dehydratase, found in Vibrio campbellii (strain ATCC BAA-1116).